The following is a 798-amino-acid chain: Tripartite terminase subunit 1 (798 aa).

The segment at 191–219 (CFQCYEELMAVPNQGRSINRRMQGLLCDH) adopts a C3H1-type zinc-finger fold. Low complexity predominate over residues 416 to 429 (AAGAARSRAEAASG). Positions 416–458 (AAGAARSRAEAASGAGAGGEEGAGAAAGRGNTGGDEGAGTTTA) are disordered. A compositionally biased stretch (gly residues) spans 430–452 (AGAGGEEGAGAAAGRGNTGGDEG). 674-681 (YNETFGKQ) is a binding site for ATP.

This sequence belongs to the herpesviridae TRM1 protein family. In terms of assembly, associates with TRM2 and TRM3 to form the tripartite terminase complex. Interacts with portal protein.

It localises to the host nucleus. Its function is as follows. Component of the molecular motor that translocates viral genomic DNA in empty capsid during DNA packaging. Forms a tripartite terminase complex together with TRM2 and TRM3 in the host cytoplasm. Once the complex reaches the host nucleus, it interacts with the capsid portal vertex. This portal forms a ring in which genomic DNA is translocated into the capsid. TRM1 carries an endonuclease activity that plays an important role for the cleavage of concatemeric viral DNA into unit length genomes. This Murid herpesvirus 1 (strain Smith) (MuHV-1) protein is Tripartite terminase subunit 1.